Here is a 151-residue protein sequence, read N- to C-terminus: NADPH-dependent 7-cyano-7-deazaguanine reductase (151 aa).

Residue cysteine 51 is the Thioimide intermediate of the active site. Catalysis depends on aspartate 58, which acts as the Proton donor. Residues 73–75 (VES) and 92–93 (HE) each bind substrate.

The protein belongs to the GTP cyclohydrolase I family. QueF type 1 subfamily.

The protein resides in the cytoplasm. The enzyme catalyses 7-aminomethyl-7-carbaguanine + 2 NADP(+) = 7-cyano-7-deazaguanine + 2 NADPH + 3 H(+). It participates in tRNA modification; tRNA-queuosine biosynthesis. Its function is as follows. Catalyzes the NADPH-dependent reduction of 7-cyano-7-deazaguanine (preQ0) to 7-aminomethyl-7-deazaguanine (preQ1). The sequence is that of NADPH-dependent 7-cyano-7-deazaguanine reductase from Bacteroides fragilis (strain YCH46).